Here is a 229-residue protein sequence, read N- to C-terminus: Phosphatidylinositol N-acetylglucosaminyltransferase subunit GPI15 (229 aa).

The next 2 helical transmembrane spans lie at 59–79 and 101–121; these read IQYH…VICL and ILII…GPSV.

This sequence belongs to the PIGH family. Component of the phosphatidylinositol N-acetylglucosaminyltransferase (GPI-GlcNAc transferase) complex composed of at least GPI1, GPI2, GPI3, GPI15, GPI19 and ERI1.

The protein localises to the membrane. It carries out the reaction a 1,2-diacyl-sn-glycero-3-phospho-(1D-myo-inositol) + UDP-N-acetyl-alpha-D-glucosamine = a 6-(N-acetyl-alpha-D-glucosaminyl)-1-(1,2-diacyl-sn-glycero-3-phospho)-1D-myo-inositol + UDP + H(+). Its pathway is glycolipid biosynthesis; glycosylphosphatidylinositol-anchor biosynthesis. Part of the complex catalyzing the transfer of N-acetylglucosamine from UDP-N-acetylglucosamine to phosphatidylinositol, the first step of GPI biosynthesis. The chain is Phosphatidylinositol N-acetylglucosaminyltransferase subunit GPI15 (GPI15) from Saccharomyces cerevisiae (strain ATCC 204508 / S288c) (Baker's yeast).